Reading from the N-terminus, the 336-residue chain is MDCGMENCNGGISNGDVLGKHEKLIIDTDPGIDDSMAILMAFQTPELEILGLTTVFGNVSTQDATRNALLLCEIAGFPDVPVAEGSSEPLKGGIPRVADFVHGKNGLGDVSLPPPSRKKSEKSAAEFLDEKVEEYPGEVTILALGPLTNLALAIKRDSSFASKVKKIVILGGAFFSLGNVNPAAEANIYGDPEAADVVFTSGADITVVGINITTQLKLSDDDLLELGNCKGKHSKLISDMCKFYRDWHVKSDGVYGVYLHDPVSFVAVVRPDLFTYKKGVVRVETQGICVGHTLMDQGLKRWNGSNPWVGYSPISVAWTVDVEGVLEYVKAKLMKP.

Catalysis depends on residues Asp-29 and His-260.

This sequence belongs to the IUNH family. Homodimer. Component of the NSH heterocomplex made of URH1/NSH1 and URH2/NSH2 which exhibits strong xanthosine nucleosidase activity. Interacts with URH2. In terms of tissue distribution, expressed ubiquitously in leaves, flowers, stems, pollen cells, root tip meristem and root vasculature.

The protein resides in the cytoplasm. The catalysed reaction is uridine + H2O = D-ribose + uracil. It carries out the reaction xanthosine + H2O = D-ribose + xanthine. The enzyme catalyses inosine + H2O = hypoxanthine + D-ribose. It catalyses the reaction adenosine + H2O = D-ribose + adenine. Functionally, involved in purine and pyrimidine breakdown rather than in pyrimidine salvage, especially in response to dark stress. Together with URH2, required for efficient inosine and xanthosine hydrolytic activities. Unable to use cytidine as a substrate. Can use uridine, inosine, adenosine as well as the cytokinin derivative isopentenyladenine-riboside as substrates. Also hydrolyzes xanthosine with high efficiency. The sequence is that of Uridine nucleosidase 1 from Arabidopsis thaliana (Mouse-ear cress).